The chain runs to 126 residues: Fluoride-specific ion channel FluC (126 aa).

Transmembrane regions (helical) follow at residues 35–55 (WWTL…IGLL), 71–91 (VGML…WLLF), and 101–121 (LYVV…MILI). Na(+) contacts are provided by Gly-75 and Thr-78.

Belongs to the fluoride channel Fluc/FEX (TC 1.A.43) family.

The protein localises to the cell inner membrane. The enzyme catalyses fluoride(in) = fluoride(out). Its activity is regulated as follows. Na(+) is not transported, but it plays an essential structural role and its presence is essential for fluoride channel function. Functionally, fluoride-specific ion channel. Important for reducing fluoride concentration in the cell, thus reducing its toxicity. This chain is Fluoride-specific ion channel FluC, found in Sphingopyxis alaskensis (strain DSM 13593 / LMG 18877 / RB2256) (Sphingomonas alaskensis).